A 336-amino-acid polypeptide reads, in one-letter code: Calcium uniporter protein 3, mitochondrial (336 aa).

The N-terminal 69 residues, 1 to 69 (MAMRKLLSKK…RFMHNSAMIR (69 aa)), are a transit peptide targeting the mitochondrion. 2 helical membrane-spanning segments follow: residues 231–251 (LWAG…LTFW) and 257–277 (VMEP…YAFF). The short motif at 255–263 (WDVMEPICF) is the Selectivity filter element. Position 259 (Glu259) interacts with Ca(2+).

Belongs to the MCU (TC 1.A.77) family.

It localises to the mitochondrion inner membrane. It catalyses the reaction Ca(2+)(in) = Ca(2+)(out). Its function is as follows. Mitochondrial inner membrane calcium uniporter that mediates calcium uptake into mitochondria. Constitutes a pore-forming and calcium-conducting subunit. Mitochondrial calcium homeostasis plays key roles in cellular physiology and regulates cell bioenergetics, cytoplasmic calcium signals and activation of cell death pathways. This Arabidopsis thaliana (Mouse-ear cress) protein is Calcium uniporter protein 3, mitochondrial.